Reading from the N-terminus, the 358-residue chain is Protein RecA (358 aa).

Residue 67–74 (GPESSGKT) participates in ATP binding.

This sequence belongs to the RecA family.

Its subcellular location is the cytoplasm. In terms of biological role, can catalyze the hydrolysis of ATP in the presence of single-stranded DNA, the ATP-dependent uptake of single-stranded DNA by duplex DNA, and the ATP-dependent hybridization of homologous single-stranded DNAs. It interacts with LexA causing its activation and leading to its autocatalytic cleavage. The chain is Protein RecA from Xenorhabdus bovienii (Xenorhabdus nematophila subsp. bovienii).